Consider the following 420-residue polypeptide: Corticotropin-releasing factor receptor 1 (420 aa).

An N-terminal signal peptide occupies residues 1-28; it reads MVPGPRPALLLLLFLLQAFLLWDSPVAA. At 29 to 116 the chain is on the extracellular side; it reads SIQEQYCESL…CQEILSEEKR (88 aa). Intrachain disulfides connect C35–C59, C49–C92, and C73–C107. 5 N-linked (GlcNAc...) asparagine glycosylation sites follow: N43, N50, N83, N95, and N103. Residues 117–147 traverse the membrane as a helical segment; it reads SKLHYHIAVIINYLGHCVSLGTLLVAFVLFM. The Cytoplasmic segment spans residues 148–154; that stretch reads RLRSIRC. The chain crosses the membrane as a helical span at residues 155–179; that stretch reads LRNIIHWNLITAFILRNATWFVVQL. The Extracellular segment spans residues 180-194; sequence TMNPEVHESNVVWCR. C193 and C263 are joined by a disulfide. The chain crosses the membrane as a helical span at residues 195–223; that stretch reads LVTAAYNYFHVTNFFWMFGEGCYLHTAIV. Topologically, residues 224–230 are cytoplasmic; sequence LTYSTDK. Residues 231–258 form a helical membrane-spanning segment; the sequence is LRKWMFICIGWCIPFPIIVAWAIGKLYY. Topologically, residues 259 to 274 are extracellular; it reads DNEKCWFGKRAGVYTD. The helical transmembrane segment at 275-300 threads the bilayer; it reads YIYQGPMILVLLINFIFLFNIVRILM. The Cytoplasmic segment spans residues 301–311; it reads TKLRASTTSET. The chain crosses the membrane as a helical span at residues 312 to 336; sequence IQYRKAVKATLVLLSLLGITYMLFF. Residues 337-343 lie on the Extracellular side of the membrane; the sequence is VNPGEDE. A helical membrane pass occupies residues 344–373; it reads ISRIVFIYFNSFLESFQGFFVSVFYCFLNS. Residues 374–420 are Cytoplasmic-facing; the sequence is EVRSAVRKRWHRWQDKHSIRARVARAMSIPTSPTRVSFHSIKQSSAV.

Belongs to the G-protein coupled receptor 2 family. In terms of assembly, interacts (via N-terminal extracellular domain) with CRF and UCN.

The protein localises to the cell membrane. Its function is as follows. G-protein coupled receptor for CRH (corticotropin-releasing factor) and UCN (urocortin). Has high affinity for CRH and UCN. Ligand binding causes a conformation change that triggers signaling via guanine nucleotide-binding proteins (G proteins) and down-stream effectors, such as adenylate cyclase. Promotes the activation of adenylate cyclase, leading to increased intracellular cAMP levels. In Gallus gallus (Chicken), this protein is Corticotropin-releasing factor receptor 1 (CRHR1).